Consider the following 122-residue polypeptide: Ribosome-binding factor A (122 aa).

Belongs to the RbfA family. Monomer. Binds 30S ribosomal subunits, but not 50S ribosomal subunits or 70S ribosomes.

It is found in the cytoplasm. One of several proteins that assist in the late maturation steps of the functional core of the 30S ribosomal subunit. Associates with free 30S ribosomal subunits (but not with 30S subunits that are part of 70S ribosomes or polysomes). Required for efficient processing of 16S rRNA. May interact with the 5'-terminal helix region of 16S rRNA. The protein is Ribosome-binding factor A of Dichelobacter nodosus (strain VCS1703A).